Reading from the N-terminus, the 117-residue chain is MKSKRGFTLLEVLVALAIFATAAISVIRSVSQHINTVNYLEEKMFAAMVVDNQMAQVMLNPQSLAAREGSEQMAGRTWYWKLSPVKTADNLLKAFDVSVATEKGATPVVTVRSYVAN.

The propeptide at 1 to 6 (MKSKRG) is leader sequence. N-methylphenylalanine is present on phenylalanine 7. The chain crosses the membrane as a helical span at residues 7–27 (FTLLEVLVALAIFATAAISVI).

Belongs to the GSP I family. As to quaternary structure, type II secretion is composed of four main components: the outer membrane complex, the inner membrane complex, the cytoplasmic secretion ATPase and the periplasm-spanning pseudopilus. Interacts with core component EpsG. Cleaved by prepilin peptidase. In terms of processing, methylated by prepilin peptidase at the amino group of the N-terminal phenylalanine once the leader sequence is cleaved by prepilin peptidase.

Its subcellular location is the cell inner membrane. Functionally, component of the type II secretion system required for the energy-dependent secretion of extracellular factors such as proteases and toxins from the periplasm. Part of the pseudopilus tip complex that is critical for the recognition and binding of secretion substrates. The chain is Type II secretion system protein I (epsI) from Vibrio cholerae serotype O1 (strain ATCC 39315 / El Tor Inaba N16961).